Here is a 597-residue protein sequence, read N- to C-terminus: Elongation factor 4 (597 aa).

The tr-type G domain occupies 2 to 184; that stretch reads QHIRNFSIIA…AIVARVPSPE (183 aa). Residues 14-19 and 131-134 each bind GTP; these read DHGKST and NKMD.

It belongs to the TRAFAC class translation factor GTPase superfamily. Classic translation factor GTPase family. LepA subfamily.

The protein resides in the cell inner membrane. The catalysed reaction is GTP + H2O = GDP + phosphate + H(+). Its function is as follows. Required for accurate and efficient protein synthesis under certain stress conditions. May act as a fidelity factor of the translation reaction, by catalyzing a one-codon backward translocation of tRNAs on improperly translocated ribosomes. Back-translocation proceeds from a post-translocation (POST) complex to a pre-translocation (PRE) complex, thus giving elongation factor G a second chance to translocate the tRNAs correctly. Binds to ribosomes in a GTP-dependent manner. The sequence is that of Elongation factor 4 from Bordetella avium (strain 197N).